Reading from the N-terminus, the 463-residue chain is tRNA (guanine(10)-N(2))-methyltransferase TRMT11 (463 aa).

A2 is subject to N-acetylalanine.

This sequence belongs to the class I-like SAM-binding methyltransferase superfamily. TRM11 methyltransferase family. As to quaternary structure, part of the heterodimeric TRMT11-TRM112 methyltransferase complex; this complex forms an active tRNA methyltransferase, where TRMT112 acts as an activator of the catalytic subunit TRMT11.

It is found in the cytoplasm. It catalyses the reaction guanosine(10) in tRNA + S-adenosyl-L-methionine = N(2)-methylguanosine(10) in tRNA + S-adenosyl-L-homocysteine + H(+). Its function is as follows. Catalytic subunit of the TRMT11-TRM112 methyltransferase complex, that specifically mediates the S-adenosyl-L-methionine-dependent N(2)-methylation of guanosine nucleotide at position 10 (m2G10) in tRNAs. This is one of the major tRNA (guanine-N(2))-methyltransferases. In Homo sapiens (Human), this protein is tRNA (guanine(10)-N(2))-methyltransferase TRMT11.